Here is a 126-residue protein sequence, read N- to C-terminus: Fluoride-specific ion channel FluC (126 aa).

A run of 4 helical transmembrane segments spans residues 6–26 (FLAV…LAIL), 36–56 (YGTL…VGFF), 69–89 (LVIT…GEVV), and 99–119 (IGVL…MLGF). Residues Gly76 and Thr79 each contribute to the Na(+) site.

Belongs to the fluoride channel Fluc/FEX (TC 1.A.43) family.

Its subcellular location is the cell inner membrane. It carries out the reaction fluoride(in) = fluoride(out). Na(+) is not transported, but it plays an essential structural role and its presence is essential for fluoride channel function. Its function is as follows. Fluoride-specific ion channel. Important for reducing fluoride concentration in the cell, thus reducing its toxicity. The sequence is that of Fluoride-specific ion channel FluC from Ralstonia pickettii (strain 12J).